The following is a 281-amino-acid chain: ATP phosphoribosyltransferase (281 aa).

The protein belongs to the ATP phosphoribosyltransferase family. Long subfamily. The cofactor is Mg(2+).

Its subcellular location is the cytoplasm. The catalysed reaction is 1-(5-phospho-beta-D-ribosyl)-ATP + diphosphate = 5-phospho-alpha-D-ribose 1-diphosphate + ATP. The protein operates within amino-acid biosynthesis; L-histidine biosynthesis; L-histidine from 5-phospho-alpha-D-ribose 1-diphosphate: step 1/9. Its activity is regulated as follows. Feedback inhibited by histidine. Its function is as follows. Catalyzes the condensation of ATP and 5-phosphoribose 1-diphosphate to form N'-(5'-phosphoribosyl)-ATP (PR-ATP). Has a crucial role in the pathway because the rate of histidine biosynthesis seems to be controlled primarily by regulation of HisG enzymatic activity. This chain is ATP phosphoribosyltransferase, found in Kocuria rhizophila (strain ATCC 9341 / DSM 348 / NBRC 103217 / DC2201).